The primary structure comprises 169 residues: S-ribosylhomocysteine lyase (169 aa).

Residues His-54, His-58, and Cys-128 each contribute to the Fe cation site.

The protein belongs to the LuxS family. As to quaternary structure, homodimer. Fe cation serves as cofactor.

It carries out the reaction S-(5-deoxy-D-ribos-5-yl)-L-homocysteine = (S)-4,5-dihydroxypentane-2,3-dione + L-homocysteine. Functionally, involved in the synthesis of autoinducer 2 (AI-2) which is secreted by bacteria and is used to communicate both the cell density and the metabolic potential of the environment. The regulation of gene expression in response to changes in cell density is called quorum sensing. Catalyzes the transformation of S-ribosylhomocysteine (RHC) to homocysteine (HC) and 4,5-dihydroxy-2,3-pentadione (DPD). This Shewanella putrefaciens (strain CN-32 / ATCC BAA-453) protein is S-ribosylhomocysteine lyase.